The sequence spans 591 residues: L-fucose isomerase (591 aa).

Residues glutamate 337 and aspartate 361 each act as proton acceptor in the active site. Positions 337, 361, and 528 each coordinate Mn(2+).

It belongs to the L-fucose isomerase family. In terms of assembly, homohexamer. Mn(2+) is required as a cofactor.

Its subcellular location is the cytoplasm. The catalysed reaction is L-fucose = L-fuculose. It participates in carbohydrate degradation; L-fucose degradation; L-lactaldehyde and glycerone phosphate from L-fucose: step 1/3. Converts the aldose L-fucose into the corresponding ketose L-fuculose. In Escherichia coli O157:H7 (strain EC4115 / EHEC), this protein is L-fucose isomerase.